The following is a 149-amino-acid chain: Deoxyuridine 5'-triphosphate nucleotidohydrolase (149 aa).

Residues 68-70 (RSG), N81, and 85-87 (LID) contribute to the substrate site.

The protein belongs to the dUTPase family. Mg(2+) serves as cofactor.

The enzyme catalyses dUTP + H2O = dUMP + diphosphate + H(+). The protein operates within pyrimidine metabolism; dUMP biosynthesis; dUMP from dCTP (dUTP route): step 2/2. Its function is as follows. This enzyme is involved in nucleotide metabolism: it produces dUMP, the immediate precursor of thymidine nucleotides and it decreases the intracellular concentration of dUTP so that uracil cannot be incorporated into DNA. The chain is Deoxyuridine 5'-triphosphate nucleotidohydrolase from Aromatoleum aromaticum (strain DSM 19018 / LMG 30748 / EbN1) (Azoarcus sp. (strain EbN1)).